The sequence spans 338 residues: Ketol-acid reductoisomerase (NADP(+)) (338 aa).

The KARI N-terminal Rossmann domain maps to 1–181; it reads MKVFYDKDAD…GGGRAGIIET (181 aa). NADP(+) contacts are provided by residues 24-27, Arg-47, and Ser-52; that span reads YGSQ. His-107 is a catalytic residue. Gly-133 is a binding site for NADP(+). The KARI C-terminal knotted domain occupies 182–327; the sequence is NFREETETDL…AKLRAMMPWI (146 aa). Mg(2+) contacts are provided by Asp-190, Glu-194, Glu-226, and Glu-230. Residue Ser-251 participates in substrate binding.

Belongs to the ketol-acid reductoisomerase family. Requires Mg(2+) as cofactor.

It catalyses the reaction (2R)-2,3-dihydroxy-3-methylbutanoate + NADP(+) = (2S)-2-acetolactate + NADPH + H(+). The enzyme catalyses (2R,3R)-2,3-dihydroxy-3-methylpentanoate + NADP(+) = (S)-2-ethyl-2-hydroxy-3-oxobutanoate + NADPH + H(+). It participates in amino-acid biosynthesis; L-isoleucine biosynthesis; L-isoleucine from 2-oxobutanoate: step 2/4. The protein operates within amino-acid biosynthesis; L-valine biosynthesis; L-valine from pyruvate: step 2/4. Its function is as follows. Involved in the biosynthesis of branched-chain amino acids (BCAA). Catalyzes an alkyl-migration followed by a ketol-acid reduction of (S)-2-acetolactate (S2AL) to yield (R)-2,3-dihydroxy-isovalerate. In the isomerase reaction, S2AL is rearranged via a Mg-dependent methyl migration to produce 3-hydroxy-3-methyl-2-ketobutyrate (HMKB). In the reductase reaction, this 2-ketoacid undergoes a metal-dependent reduction by NADPH to yield (R)-2,3-dihydroxy-isovalerate. The chain is Ketol-acid reductoisomerase (NADP(+)) from Ralstonia nicotianae (strain ATCC BAA-1114 / GMI1000) (Ralstonia solanacearum).